The sequence spans 1027 residues: MRAALWTLGLGPLLLNLWAVPIGGPGALRLAYRHSTCDGVVLVRHHGAWGYVCNQEWTLAEASVVCRQLGCGPAVGAPKYVPLPGEMAQPWLHNVSCRGNESSLWECSLGSWCQSPCPHAWVVVALCSNGTFRELRLVKGRSPCAGLPEIRNVNGVDRLCVLHVEEAMVFCRELGCGPVLQAPRRDVGVVRKYLACRGTEPTIRSCRLDNNFRSGCDLRLDAEVVCSGHTEARLVGGEHPCAGRLEVTWGTVCDAALDLATAHVVCRELQCGAVVSTPEGARFGRGSGPVWTEAFRCAGNESLLFHCPRGRGSQCGHGHDAGLRCSEFRMVNGSSSCEGRVEFQVQGSWAPLCATHWDIADATVLCHQLNCGNAVAAPGGGHFGDGDAAIWPDAFHCEGTESYLWNCPVSTLGAPACAPGNTASAVCSGLAHALRLREGQSRCDGRVEVSLDGVWGRVLDDAWDLRGAGVVCRQLGCRGAQQAYDAPAPSRGSVQVALSRVRCLGTETRLTQCNVSATLQEPAGTSRDAGVVCSGEVGTASPMARRHGIPGALTLSLHREPQGAAGRGAGALHGGAWGTVCDDAWDLRDAHVVCRQLGCGRALSALGAAHFGAGAGRIWLDELGCQGHESALWQCPSAGWGRHDWRHKEDAGVFCSESVALRLRGGTCCCAGWLDVFYNGTWGAMCSNALKDLSLSIICKQLGCGVWGVGLAGEQALPLCGHRDRLGGQHRVPQAAQLHSVAMPFPPMAPALLRPSRAGLSEDRPQAAGEPLNCSSWLGCPEEGALRVRGGEDRCSGRVELWHAGSWGTVCDDGWDLADAEVVCRQLGCGRAVAALGAAAFGPGSGPVWLDEVGCRGSEASLWGCPAERWGRGDRAHEEDAGVRCWEPGPGPPLPAAPFRTFWVVSVVLGSLLGLLLLGLMAFLILPRVTQAMQRGLGRSEVSPGEAIYDVIGEMPPAGLYEEIMEAEAVLQDEEDGSVVKVDTEAAVSGEVSNLLEGQSIRAEGGHSRPVSQGYDEAAFPLEEMTL.

A signal peptide spans 1–19 (MRAALWTLGLGPLLLNLWA). The Extracellular segment spans residues 20-906 (VPIGGPGALR…APFRTFWVVS (887 aa)). One can recognise an SRCR 1 domain in the interval 28–128 (LRLAYRHSTC…HAWVVVALCS (101 aa)). 3 cysteine pairs are disulfide-bonded: Cys53/Cys117, Cys66/Cys127, and Cys97/Cys107. Asn94 is a glycosylation site (N-linked (GlcNAc...) asparagine). N-linked (GlcNAc...) asparagine glycosylation is present at Asn129. 7 consecutive SRCR domains span residues 135-227 (LRLV…VVCS), 232-326 (ARLV…LRCS), 328-428 (FRMV…AVCS), 434-534 (LRLR…VVCS), 555-656 (LSLH…VFCS), 661-761 (LRLR…AGLS), and 786-886 (LRVR…VRCW). 6 cysteine pairs are disulfide-bonded: Cys160–Cys216, Cys171–Cys226, Cys196–Cys206, Cys253–Cys315, Cys266–Cys325, and Cys297–Cys307. N-linked (GlcNAc...) asparagine glycosylation is present at Asn332. Intrachain disulfides connect Cys353/Cys417, Cys366/Cys427, Cys397/Cys407, Cys472/Cys533, Cys503/Cys513, Cys594/Cys655, and Cys625/Cys635. Disulfide bonds link Cys824/Cys885 and Cys855/Cys865. The helical transmembrane segment at 907 to 927 (VVLGSLLGLLLLGLMAFLILP) threads the bilayer. Residues 928 to 1027 (RVTQAMQRGL…AAFPLEEMTL (100 aa)) are Cytoplasmic-facing.

In terms of tissue distribution, mainly expressed by CD4(+) and CD8(+) T lymphocytes. Also highly expressed in small intestine and colon. Expressed (at protein level) in small intestine, stomach, gall bladder, and placental villi.

The protein localises to the membrane. Its function is as follows. May play a role in the immune system, perhaps as a co-receptor on alphabeta and gammadelta T-cells. In Homo sapiens (Human), this protein is Scavenger receptor cysteine-rich domain-containing protein SCART1.